Consider the following 207-residue polypeptide: Killer cell lectin-like receptor subfamily F member 2 (207 aa).

Over 1 to 30 (MENEDGYMTLSFKNRCKSKQKSKDFSLYPQ) the chain is Cytoplasmic. A Phosphotyrosine modification is found at Tyr7. The chain crosses the membrane as a helical; Signal-anchor for type II membrane protein span at residues 31–51 (YYCLLLIFGCIVILIFIMTGI). Residues 52–207 (DLKFWHKKMD…ILTHNGTSGV (156 aa)) lie on the Extracellular side of the membrane. Asn67 carries an N-linked (GlcNAc...) asparagine glycan. Disulfide bonds link Cys78–Cys89, Cys106–Cys193, and Cys172–Cys185. The C-type lectin domain maps to 85 to 194 (NEGKCYWFST…CSSTFKGICQ (110 aa)). An N-linked (GlcNAc...) asparagine glycan is attached at Asn202.

Homodimer; non-disulfide-linked. Interacts with CLEC2A. Post-translationally, N-glycosylated.

It is found in the cell membrane. Functionally, C-type lectin-like receptor involved in natural killer cell mediated cytotoxicity and cytokine secretion in keratinocytes via its interaction with CLEC2A. Triggers degranulation in a SYK-dependent manner and stimulates SYK phosphotyrosinylation without recruiting SYK directly. The chain is Killer cell lectin-like receptor subfamily F member 2 (KLRF2) from Homo sapiens (Human).